The following is a 157-amino-acid chain: Small ribosomal subunit protein uS7 (157 aa).

This sequence belongs to the universal ribosomal protein uS7 family. In terms of assembly, part of the 30S ribosomal subunit. Contacts proteins S9 and S11.

In terms of biological role, one of the primary rRNA binding proteins, it binds directly to 16S rRNA where it nucleates assembly of the head domain of the 30S subunit. Is located at the subunit interface close to the decoding center, probably blocks exit of the E-site tRNA. This chain is Small ribosomal subunit protein uS7, found in Polaromonas sp. (strain JS666 / ATCC BAA-500).